Here is a 422-residue protein sequence, read N- to C-terminus: DNA-binding transcriptional activator AdeR (422 aa).

This sequence belongs to the CdaR family.

Functionally, activates ald expression in response to alanine availability and is important for normal sporulation in B.subtilis. The sequence is that of DNA-binding transcriptional activator AdeR from Bacillus subtilis (strain 168).